Here is a 314-residue protein sequence, read N- to C-terminus: Small ribosomal subunit protein uS2c (314 aa).

It belongs to the universal ribosomal protein uS2 family.

The protein resides in the plastid. It is found in the chloroplast. The protein is Small ribosomal subunit protein uS2c (rps2) of Stigeoclonium helveticum (Green alga).